The following is a 436-amino-acid chain: Enolase (436 aa).

Gln167 lines the (2R)-2-phosphoglycerate pocket. Glu209 functions as the Proton donor in the catalytic mechanism. Mg(2+)-binding residues include Asp246, Glu291, and Asp318. (2R)-2-phosphoglycerate-binding residues include Lys343, Arg372, Ser373, and Lys394. Residue Lys343 is the Proton acceptor of the active site.

This sequence belongs to the enolase family. In terms of assembly, component of the RNA degradosome, a multiprotein complex involved in RNA processing and mRNA degradation. Requires Mg(2+) as cofactor.

It localises to the cytoplasm. Its subcellular location is the secreted. The protein resides in the cell surface. The enzyme catalyses (2R)-2-phosphoglycerate = phosphoenolpyruvate + H2O. It functions in the pathway carbohydrate degradation; glycolysis; pyruvate from D-glyceraldehyde 3-phosphate: step 4/5. Catalyzes the reversible conversion of 2-phosphoglycerate (2-PG) into phosphoenolpyruvate (PEP). It is essential for the degradation of carbohydrates via glycolysis. The chain is Enolase from Haemophilus influenzae (strain PittEE).